Reading from the N-terminus, the 300-residue chain is Epimerase family protein SAR0825 (300 aa).

The protein belongs to the NAD(P)-dependent epimerase/dehydratase family. SDR39U1 subfamily.

This Staphylococcus aureus (strain MRSA252) protein is Epimerase family protein SAR0825.